Reading from the N-terminus, the 321-residue chain is Olfactory receptor 52N4 (321 aa).

Over 1–27 (MLTLNKTDLIPASFILNGVPGLEDTQL) the chain is Extracellular. N-linked (GlcNAc...) asparagine glycosylation is present at Asn5. The chain crosses the membrane as a helical span at residues 28–48 (WISFPFCSMYVVAMVGNCGLL). Over 49–56 (YLIHYEDA) the chain is Cytoplasmic. A helical membrane pass occupies residues 57–77 (LHKPMYYFLAMLSFTDLVMCS). Over 78-101 (STIPKALCIFWFHLKDIGFDECLV) the chain is Extracellular. An intrachain disulfide couples Cys99 to Cys191. The chain crosses the membrane as a helical span at residues 102-122 (QMFFTHTFTGMESGVLMLMAL). The Cytoplasmic segment spans residues 123–141 (DRYVAICYPLRYSTILTNP). The helical transmembrane segment at 142–162 (VIAKVGTATFLRGVLLIIPFT) threads the bilayer. Over 163-198 (FLTKLLPYCRGNILPHTYCDHMSVAKLSCGNVKVNA) the chain is Extracellular. A helical membrane pass occupies residues 199-219 (IYGLMVALLIWGFDILCITNS). Residues 220–239 (YTMILRAVVSLSSADARQKA) are Cytoplasmic-facing. Residues 240–260 (FNTCTAHICAIVFSYTPAFFS) traverse the membrane as a helical segment. At 261–276 (FFSHRFGEHIIPPSCH) the chain is on the extracellular side. A helical membrane pass occupies residues 277 to 297 (IIVANIYLLLPPTMNPIVYGV). The Cytoplasmic segment spans residues 298-321 (KTKQIRDCVIRILSGSKDTKSYSM).

The protein belongs to the G-protein coupled receptor 1 family.

Its subcellular location is the cell membrane. Its function is as follows. Odorant receptor. The protein is Olfactory receptor 52N4 (OR52N4) of Homo sapiens (Human).